A 303-amino-acid polypeptide reads, in one-letter code: N-acetyl-D-glucosamine kinase (303 aa).

ATP-binding positions include 4–11 (GFDVGGTK) and 133–140 (GFGGGLIF). Zn(2+)-binding residues include His157, Cys177, Cys179, and Cys184.

This sequence belongs to the ROK (NagC/XylR) family. NagK subfamily.

The enzyme catalyses N-acetyl-D-glucosamine + ATP = N-acetyl-D-glucosamine 6-phosphate + ADP + H(+). The protein operates within cell wall biogenesis; peptidoglycan recycling. Functionally, catalyzes the phosphorylation of N-acetyl-D-glucosamine (GlcNAc) derived from cell-wall degradation, yielding GlcNAc-6-P. The polypeptide is N-acetyl-D-glucosamine kinase (Aliivibrio fischeri (strain ATCC 700601 / ES114) (Vibrio fischeri)).